The primary structure comprises 517 residues: Optineurin (517 aa).

Coiled-coil stretches lie at residues 15–127 (NLGS…DLVA) and 174–453 (KAES…LGRH). 2 disordered regions span residues 216-237 (KLEH…TNAS) and 454-488 (SMSE…WQQQ). Polar residues predominate over residues 222 to 237 (SSAQTSLPSAAETNAS). Residues 487–517 (QQNIPDHACPKCGEVLPDLDSLQIHIMDCII) form a CCHC NOA-type zinc finger. Zn(2+) contacts are provided by Cys495, Cys498, His511, and Cys515.

It is found in the cytoplasm. It localises to the perinuclear region. The protein localises to the golgi apparatus. Its subcellular location is the trans-Golgi network. The protein resides in the cytoplasmic vesicle. It is found in the recycling endosome. It localises to the autophagosome. Functionally, probably part of the TNF-alpha signaling pathway that can shift the equilibrium toward induction of cell death. May act by regulating membrane trafficking and cellular morphogenesis. This Danio rerio (Zebrafish) protein is Optineurin (optn).